Consider the following 420-residue polypeptide: F420-non-reducing hydrogenase vhu subunit A (420 aa).

Residues Cys61 and Cys64 each contribute to the Ni(2+) site.

Belongs to the [NiFe]/[NiFeSe] hydrogenase large subunit family. The F420-non-reducing hydrogenase vhu is composed of four subunits; VhuA, VhuD, VhuG and VhuU. Requires Ni(2+) as cofactor.

The chain is F420-non-reducing hydrogenase vhu subunit A (vhuA) from Methanococcus voltae.